Reading from the N-terminus, the 48-residue chain is Large ribosomal subunit protein bL36c (48 aa).

It belongs to the bacterial ribosomal protein bL36 family.

It localises to the plastid. The protein localises to the chloroplast. The protein is Large ribosomal subunit protein bL36c (rpl36) of Guillardia theta (Cryptophyte).